Here is a 559-residue protein sequence, read N- to C-terminus: MVKETKRMIQAKKGIELECKGWEQEAVLRMLYNNLDPEVAEKPDELIVYGGIGKAARNWAAFEAIVEQLRTLEKDETLLIQSGKPVGRFKTHEQAPRVLLSNSVLVPKWAHWEHFNELEKQGLMMYGQMTAGSWIYIGSQGILQGTYETFAELARQHFGGSLKGTLTLTAGLGGMGGAQPLAVTMNGGVVIGVDVDRSRIEKRIATKYTDRITESLDQALAWASEAKAKGEPLSIGLVGNAAHLHHEILQRGVEVDVVTDQTSAHDPLNGYIPEGHSLEGAELLRKENPQRYMALAKQSMKKHVEAMLAFQRRGAIVFDYGNNIRQVAKDEGLEEAFAFPGFVPAYIRPLFCEGKGPFRWAALSGDPEDIYRTDRLIKELFPENEALIRWIDIAQEKVTFQGLPARICWLGYGERMKMGLEINRLVRNGELKAPIVIGRDHLDCGSVASPNRETEAMKDGSDAVGDWAILNALINTAAGGSWISVHHGGGVGMGYSLHAGMVVVADGTENAEKRLRRVLTTDPGMGIIRHADAGYELAKQVAREKGVMIPMEDKNEEGV.

NAD(+) is bound by residues 50–51 (GG), Gln128, 174–176 (GMG), Asp194, Arg199, 240–241 (NA), 261–265 (QTSAH), 271–272 (YI), and Tyr320. Cys408 is an active-site residue. NAD(+) is bound at residue Gly490.

This sequence belongs to the urocanase family. The cofactor is NAD(+).

The protein resides in the cytoplasm. It catalyses the reaction 4-imidazolone-5-propanoate = trans-urocanate + H2O. It participates in amino-acid degradation; L-histidine degradation into L-glutamate; N-formimidoyl-L-glutamate from L-histidine: step 2/3. In terms of biological role, catalyzes the conversion of urocanate to 4-imidazolone-5-propionate. This is Urocanate hydratase from Halalkalibacterium halodurans (strain ATCC BAA-125 / DSM 18197 / FERM 7344 / JCM 9153 / C-125) (Bacillus halodurans).